The sequence spans 301 residues: Porphobilinogen deaminase (301 aa).

C242 carries the S-(dipyrrolylmethanemethyl)cysteine modification.

This sequence belongs to the HMBS family. As to quaternary structure, monomer. Dipyrromethane serves as cofactor.

The catalysed reaction is 4 porphobilinogen + H2O = hydroxymethylbilane + 4 NH4(+). Its pathway is porphyrin-containing compound metabolism; protoporphyrin-IX biosynthesis; coproporphyrinogen-III from 5-aminolevulinate: step 2/4. Functionally, tetrapolymerization of the monopyrrole PBG into the hydroxymethylbilane pre-uroporphyrinogen in several discrete steps. This Rickettsia akari (strain Hartford) protein is Porphobilinogen deaminase.